The primary structure comprises 914 residues: Chlorate reductase subunit alpha (914 aa).

A signal peptide (tat-type signal) is located at residues M1–A32. The 4Fe-4S Mo/W bis-MGD-type domain occupies D62–D125. Residues H69, C73, C77, and C111 each contribute to the [4Fe-4S] cluster site. D205 contributes to the Mo-bis(molybdopterin guanine dinucleotide) binding site.

It belongs to the prokaryotic molybdopterin-containing oxidoreductase family. In terms of assembly, heterotrimer of alpha, beta and gamma subunits. [4Fe-4S] cluster serves as cofactor. Mo-bis(molybdopterin guanine dinucleotide) is required as a cofactor. Post-translationally, predicted to be exported by the Tat system. The position of the signal peptide cleavage has not been experimentally proven.

It localises to the periplasm. It carries out the reaction chlorate + AH2 = chlorite + A + H2O. Terminal reductase that allows anaerobic growth on chlorate as the sole respiratory oxidant. This is Chlorate reductase subunit alpha (clrA) from Ideonella dechloratans.